The following is a 377-amino-acid chain: Chaperone protein DnaJ (377 aa).

Residues 5–69 (EYYDRLGLSK…QKRAAYDQYG (65 aa)) form the J domain. Residues 133 to 215 (GAEKEIHYNR…CHGTGREKQS (83 aa)) form a CR-type zinc finger. The Zn(2+) site is built by Cys146, Cys149, Cys163, Cys166, Cys189, Cys192, Cys203, and Cys206. CXXCXGXG motif repeat units follow at residues 146–153 (CKTCSGSG), 163–170 (CGRCHGHG), 189–196 (CDVCHGTG), and 203–210 (CQTCHGTG).

Belongs to the DnaJ family. As to quaternary structure, homodimer. The cofactor is Zn(2+).

It localises to the cytoplasm. In terms of biological role, participates actively in the response to hyperosmotic and heat shock by preventing the aggregation of stress-denatured proteins and by disaggregating proteins, also in an autonomous, DnaK-independent fashion. Unfolded proteins bind initially to DnaJ; upon interaction with the DnaJ-bound protein, DnaK hydrolyzes its bound ATP, resulting in the formation of a stable complex. GrpE releases ADP from DnaK; ATP binding to DnaK triggers the release of the substrate protein, thus completing the reaction cycle. Several rounds of ATP-dependent interactions between DnaJ, DnaK and GrpE are required for fully efficient folding. Also involved, together with DnaK and GrpE, in the DNA replication of plasmids through activation of initiation proteins. The sequence is that of Chaperone protein DnaJ from Streptococcus thermophilus (strain CNRZ 1066).